The primary structure comprises 770 residues: 1,4-alpha-glucan branching enzyme GlgB (770 aa).

D437 (nucleophile) is an active-site residue. E488 acts as the Proton donor in catalysis.

This sequence belongs to the glycosyl hydrolase 13 family. GlgB subfamily. As to quaternary structure, monomer.

It catalyses the reaction Transfers a segment of a (1-&gt;4)-alpha-D-glucan chain to a primary hydroxy group in a similar glucan chain.. It functions in the pathway glycan biosynthesis; glycogen biosynthesis. In terms of biological role, catalyzes the formation of the alpha-1,6-glucosidic linkages in glycogen by scission of a 1,4-alpha-linked oligosaccharide from growing alpha-1,4-glucan chains and the subsequent attachment of the oligosaccharide to the alpha-1,6 position. This chain is 1,4-alpha-glucan branching enzyme GlgB, found in Synechococcus sp. (strain JA-3-3Ab) (Cyanobacteria bacterium Yellowstone A-Prime).